We begin with the raw amino-acid sequence, 402 residues long: uncharacterized protein (402 aa).

This is an uncharacterized protein from Saccharomyces cerevisiae (strain ATCC 204508 / S288c) (Baker's yeast).